Reading from the N-terminus, the 142-residue chain is Galactose-6-phosphate isomerase subunit LacA (142 aa).

It belongs to the LacAB/RpiB family. As to quaternary structure, heteromultimeric protein consisting of LacA and LacB.

The catalysed reaction is aldehydo-D-galactose 6-phosphate = keto-D-tagatose 6-phosphate. Its pathway is carbohydrate metabolism; D-galactose 6-phosphate degradation; D-tagatose 6-phosphate from D-galactose 6-phosphate: step 1/1. The sequence is that of Galactose-6-phosphate isomerase subunit LacA from Staphylococcus aureus.